Reading from the N-terminus, the 481-residue chain is Argininosuccinate lyase (481 aa).

This sequence belongs to the lyase 1 family. Argininosuccinate lyase subfamily.

Its subcellular location is the cytoplasm. The enzyme catalyses 2-(N(omega)-L-arginino)succinate = fumarate + L-arginine. It functions in the pathway amino-acid biosynthesis; L-arginine biosynthesis; L-arginine from L-ornithine and carbamoyl phosphate: step 3/3. This Methanococcus vannielii (strain ATCC 35089 / DSM 1224 / JCM 13029 / OCM 148 / SB) protein is Argininosuccinate lyase.